The primary structure comprises 71 residues: Non-disulfide-bridged peptide 5.5 (71 aa).

The signal sequence occupies residues 1–23; sequence MKTQFIVLIVAIVFLQLLSQSEA. Leu36 is subject to Leucine amide. A propeptide spanning residues 40 to 71 is cleaved from the precursor; sequence DLRHLDLDQFDDMFDQPEISAADMKFLQDLLR.

It belongs to the non-disulfide-bridged peptide (NDBP) superfamily. Short antimicrobial peptide (group 4) family. In terms of tissue distribution, expressed by the venom gland.

It is found in the secreted. It localises to the target cell membrane. Functionally, antimicrobial peptide. Is active on Mycobacterium abscessus subsp. massiliense (MBC=200 uM), a rapidly growing and emerging pathogen associated with healthcare infections. Also shows antifungal activities. Has a weak hemolytic activity on human erythrocytes (10% at 610 uM), indicating a low toxicity (therapeutic index (TI)=3.05). In addition, treatment of infected macrophages reduces the bacterial load. In vivo, treatment of M.abscessus-infected mice causes a decrease in the bacterial load in the lungs and liver. This Hoffmannihadrurus gertschi (Scorpion) protein is Non-disulfide-bridged peptide 5.5.